Here is a 931-residue protein sequence, read N- to C-terminus: Phosphoenolpyruvate carboxylase (931 aa).

Active-site residues include His138 and Lys594.

Belongs to the PEPCase type 1 family. It depends on Mg(2+) as a cofactor.

It catalyses the reaction oxaloacetate + phosphate = phosphoenolpyruvate + hydrogencarbonate. Forms oxaloacetate, a four-carbon dicarboxylic acid source for the tricarboxylic acid cycle. The sequence is that of Phosphoenolpyruvate carboxylase from Streptococcus agalactiae serotype III (strain NEM316).